A 290-amino-acid polypeptide reads, in one-letter code: NAD kinase (290 aa).

Catalysis depends on Asp73, which acts as the Proton acceptor. NAD(+) contacts are provided by residues 73-74 (DG), 147-148 (ND), Arg158, Arg175, Asp177, 188-193 (TAYALS), and Gln246.

This sequence belongs to the NAD kinase family. The cofactor is a divalent metal cation.

It localises to the cytoplasm. The catalysed reaction is NAD(+) + ATP = ADP + NADP(+) + H(+). Its function is as follows. Involved in the regulation of the intracellular balance of NAD and NADP, and is a key enzyme in the biosynthesis of NADP. Catalyzes specifically the phosphorylation on 2'-hydroxyl of the adenosine moiety of NAD to yield NADP. The protein is NAD kinase of Thiobacillus denitrificans (strain ATCC 25259 / T1).